The following is a 118-amino-acid chain: MARIAGVNLAIQKHVWIGLQSIYGIGRTRSRKVCDAANVAIYTKIRDLSESEIERLRVEVGKYVIEGDLRREVGMAIKRLMDLNCYRGLRHRRCLPLRGQRTRTNARTRKGPRKAIKK.

The tract at residues 99–118 is disordered; sequence GQRTRTNARTRKGPRKAIKK.

It belongs to the universal ribosomal protein uS13 family. In terms of assembly, part of the 30S ribosomal subunit. Forms a loose heterodimer with protein S19. Forms two bridges to the 50S subunit in the 70S ribosome.

Its function is as follows. Located at the top of the head of the 30S subunit, it contacts several helices of the 16S rRNA. In the 70S ribosome it contacts the 23S rRNA (bridge B1a) and protein L5 of the 50S subunit (bridge B1b), connecting the 2 subunits; these bridges are implicated in subunit movement. Contacts the tRNAs in the A and P-sites. In Xylella fastidiosa (strain M23), this protein is Small ribosomal subunit protein uS13.